We begin with the raw amino-acid sequence, 1325 residues long: NHS-like protein 3 (1325 aa).

Positions 53–85 (LEDLHTEAQEGLKILQQEEEDTSSKERNESLEN) form a coiled coil. Disordered stretches follow at residues 68–92 (QQEE…SGHS), 111–131 (QGST…KRRS), 291–348 (CSAS…KGKC), 368–570 (MSVS…AKTS), 595–614 (QTNT…TTVK), 829–891 (EVNG…MEES), 935–981 (LLST…VSEF), 1084–1138 (VGED…SSAV), 1243–1272 (GTKK…ENAT), and 1293–1313 (SDQV…EQAS). Low complexity predominate over residues 296 to 334 (ASKGSMASASPSSSRSGSGTNQAPPTTSPSRSNSQSSET). The span at 335 to 344 (IVSNSSTISS) shows a compositional bias: polar residues. Positions 369–378 (SVSSSSSWKS) are enriched in low complexity. Residues 400-412 (VRNSHSFSRSLSV) are compositionally biased toward polar residues. The span at 428 to 447 (LHHENMQRQREQGDIQDPKD) shows a compositional bias: basic and acidic residues. Polar residues predominate over residues 450 to 460 (PNNNEQTNRDI). Residues 515–524 (KTRECGENFD) are compositionally biased toward basic and acidic residues. The span at 528–541 (SPSSGYSSQSGTPT) shows a compositional bias: low complexity. The span at 834 to 850 (SPPPSPPPEHHPPPPPI) shows a compositional bias: pro residues. Polar residues-rich tracts occupy residues 935–948 (LLST…SSPE) and 1088–1100 (QVNN…TEPT). The segment covering 1124–1138 (KSNSPAKSSSASSAV) has biased composition (low complexity). A compositionally biased stretch (polar residues) spans 1302–1311 (RAQSLGNQEQ).

In terms of biological role, able to directly activate the TNF-NFkappaB signaling pathway. The sequence is that of NHS-like protein 3 (nhsl3) from Danio rerio (Zebrafish).